A 113-amino-acid chain; its full sequence is MNTLDFLDKKSLRDDIPEFRPGDTLNVNVKVIEGSKERVQVFKGVVIRRQGGGVRETFTVRKVSFGVGVERTFPVHSPTLASIEVLTRGDVRRAKLYYLRELRGKKAKIKEKR.

It belongs to the bacterial ribosomal protein bL19 family.

Its function is as follows. This protein is located at the 30S-50S ribosomal subunit interface and may play a role in the structure and function of the aminoacyl-tRNA binding site. This chain is Large ribosomal subunit protein bL19, found in Rhodococcus erythropolis (strain PR4 / NBRC 100887).